We begin with the raw amino-acid sequence, 527 residues long: Pentatricopeptide repeat-containing protein At4g25270, chloroplastic (527 aa).

The N-terminal 47 residues, 1 to 47 (MVSIVVHKPSFSYPSVSSSSMKKKPRHHQQLKQHRQNQYNNNGFTSL), are a transit peptide targeting the chloroplast. Residues 12-44 (SYPSVSSSSMKKKPRHHQQLKQHRQNQYNNNGF) are disordered. Residues 21–35 (MKKKPRHHQQLKQHR) are compositionally biased toward basic residues. 10 PPR repeats span residues 126-156 (NLGI…MSKR), 159-193 (SPFA…GVKP), 194-228 (DRFT…GFGY), 229-259 (DVYV…IPHK), 260-294 (DYVS…GIEP), 295-326 (DKVA…GMEW), 327-361 (ELSV…DTVS), 367-389 (SAHS…NAKP), 390-425 (DGIT…GIDP), and 426-457 (KMEH…MGLE). Residues 462–527 (VWGALLYACY…QMMVDRGLET (66 aa)) form a type E motif; degenerate region.

The protein belongs to the PPR family. PCMP-E subfamily.

The protein localises to the plastid. It localises to the chloroplast. The chain is Pentatricopeptide repeat-containing protein At4g25270, chloroplastic (PCMP-E53) from Arabidopsis thaliana (Mouse-ear cress).